Consider the following 365-residue polypeptide: Transcription factor KUA1 (365 aa).

Residues 1–21 form a disordered region; that stretch reads MTRRCSHCNHNGHNSRTCPNR. The CCHC-type zinc finger occupies 3–20; that stretch reads RRCSHCNHNGHNSRTCPN. Residues 8–18 show a composition bias toward polar residues; the sequence is CNHNGHNSRTC. A R/KLFGV (transcriptional repression) motif is present at residues 24–28; that stretch reads KLFGV. Residues 41-99 are disordered; that stretch reads MGNLSHYTGSGSGGHGTGSNTPGSPGDVPDHVAGDGYASEDFVAGSSSSRERKKGTPWT. An HTH myb-type domain is found at 90-146; the sequence is RERKKGTPWTEEEHRMFLLGLQKLGKGDWRGISRNYVTTRTPTQVASHAQKYFIRQS. Positions 118–142 form a DNA-binding region, H-T-H motif; sequence WRGISRNYVTTRTPTQVASHAQKYF. 2 disordered regions span residues 214–254 and 321–365; these read SMDS…QPQL and ESNK…IHAL. A compositionally biased stretch (low complexity) spans 220 to 254; that stretch reads STTGEPTATAAAASSSSRLEETTQLQSQLQPQPQL. Positions 343 to 355 are enriched in polar residues; sequence RQSAFHPNPSSDS.

Expressed ubiquitously, except in hypocotyls, root tips and lateral root primordia.

It localises to the nucleus. In terms of biological role, transcriptional repressor. Direct regulator of the transcription of peroxidase (Prxs) and reactive oxygen species (ROS)-related genes via the recognition of 5'-ATCACA-3' motif. Binds to 5'-TATCCA-3' motif (TA box) and represses the activity of corresponding promoters (e.g. sugar response genes). Regulates hypocotyl elongation in response to darkness by enhancing auxin accumulation in a phytochrome-interacting factor (PIF) proteins-dependent manner. Promotes lateral roots formation. Promotes cell expansion during leaves development via the modulation of cell wall-located Prxs. Plays a critical role in developmentally regulated and dark-induced onset of leaf senescence by repressing the transcription of several genes involved in chloroplast function and responses to light and auxin. Promotes responses to auxin, abscisic acid (ABA), and ethylene. In Arabidopsis thaliana (Mouse-ear cress), this protein is Transcription factor KUA1.